The chain runs to 346 residues: MASEQNPLGLLGIEFTEFATPDLDFMHKVFIDFGFSKLKKHKQKDIVYYKQNDINFLLNNEKQGFSAQFAKTHGPAISSMGWRVEDANFAFEGAVARGAKPAADEVKDLPYPAIYGIGDSLIYFIDTFGDDNNIYTSDFEALDEPIITQEKGFIEVDHLTNNVHKGTMEYWSNFYKDIFGFTEVRYFDIKGSQTALISYALRSPDGSFCIPINEGKGDDRNQIDEYLKEYDGPGVQHLAFRSRDIVASLDAMEGSSIQTLDIIPEYYDTIFEKLPQVTEDRDRIKHHQILVDGDEDGYLLQIFTKNLFGPIFIEIIQRKNNLGFGEGNFKALFESIERDQVRRGVL.

VOC domains follow at residues 12–141 and 155–305; these read GIEF…DFEA and EVDH…IFTK. 3 residues coordinate Fe cation: His-158, His-237, and Glu-314.

This sequence belongs to the 4HPPD family. It depends on Fe cation as a cofactor.

The protein resides in the cytoplasm. It functions in the pathway pigment biosynthesis; melanin biosynthesis. This Shewanella colwelliana (Alteromonas colwelliana) protein is Protein MelA (melA).